Here is a 162-residue protein sequence, read N- to C-terminus: D-aminoacyl-tRNA deacylase (162 aa).

Residues 145–146 (GP) carry the Gly-cisPro motif, important for rejection of L-amino acids motif.

It belongs to the DTD family. As to quaternary structure, homodimer.

The protein resides in the cytoplasm. It carries out the reaction glycyl-tRNA(Ala) + H2O = tRNA(Ala) + glycine + H(+). The catalysed reaction is a D-aminoacyl-tRNA + H2O = a tRNA + a D-alpha-amino acid + H(+). Its function is as follows. An aminoacyl-tRNA editing enzyme that deacylates mischarged D-aminoacyl-tRNAs. Also deacylates mischarged glycyl-tRNA(Ala), protecting cells against glycine mischarging by AlaRS. Acts via tRNA-based rather than protein-based catalysis; rejects L-amino acids rather than detecting D-amino acids in the active site. By recycling D-aminoacyl-tRNA to D-amino acids and free tRNA molecules, this enzyme counteracts the toxicity associated with the formation of D-aminoacyl-tRNA entities in vivo and helps enforce protein L-homochirality. This chain is D-aminoacyl-tRNA deacylase, found in Bifidobacterium longum (strain DJO10A).